A 310-amino-acid polypeptide reads, in one-letter code: 5-oxoprolinase subunit C (310 aa).

This sequence belongs to the PxpC family. In terms of assembly, forms a complex composed of PxpA, PxpB and PxpC.

It carries out the reaction 5-oxo-L-proline + ATP + 2 H2O = L-glutamate + ADP + phosphate + H(+). Its function is as follows. Catalyzes the cleavage of 5-oxoproline to form L-glutamate coupled to the hydrolysis of ATP to ADP and inorganic phosphate. This Escherichia coli (strain K12) protein is 5-oxoprolinase subunit C.